The sequence spans 394 residues: Phosphoglycerate kinase (394 aa).

Substrate is bound by residues 21 to 23 (DFN), Arg-36, 59 to 62 (HLGR), Arg-118, and Arg-151. Ser-183 bears the Phosphoserine mark. Residues Lys-201 and Gly-292 each coordinate ATP. Thr-299 carries the phosphothreonine modification. Residues Glu-323 and 350–353 (GGDS) each bind ATP.

The protein belongs to the phosphoglycerate kinase family. Monomer.

It localises to the cytoplasm. It carries out the reaction (2R)-3-phosphoglycerate + ATP = (2R)-3-phospho-glyceroyl phosphate + ADP. It participates in carbohydrate degradation; glycolysis; pyruvate from D-glyceraldehyde 3-phosphate: step 2/5. The chain is Phosphoglycerate kinase from Bacillus cereus (strain ZK / E33L).